An 845-amino-acid chain; its full sequence is Disintegrin and metalloproteinase domain-containing protein 9 (845 aa).

Residues Met-1–Ala-29 form the signal peptide. Topologically, residues Gly-30–Asp-697 are extracellular. N-linked (GlcNAc...) asparagine glycans are attached at residues Asn-144, Asn-154, and Asn-231. The Peptidase M12B domain maps to Arg-212–Pro-406. Disulfide bonds link Cys-322–Cys-401, Cys-363–Cys-385, Cys-365–Cys-370, and Cys-473–Cys-493. His-347 contributes to the Zn(2+) binding site. Residue Glu-348 is part of the active site. Zn(2+) is bound by residues His-351 and His-357. 3 N-linked (GlcNAc...) asparagine glycosylation sites follow: Asn-381, Asn-487, and Asn-636. A Disintegrin domain is found at Ala-414 to Asn-501. 3 cysteine pairs are disulfide-bonded: Cys-644–Cys-656, Cys-650–Cys-662, and Cys-664–Cys-673. The region spanning Cys-644–Gly-698 is the EGF-like domain. A helical membrane pass occupies residues Gly-698 to Ile-718. The Cytoplasmic segment spans residues Lys-719 to Thr-845. The interval Lys-729–Thr-845 is disordered. A compositionally biased stretch (polar residues) spans Met-734–Arg-745. Pro residues predominate over residues Pro-783–Gly-794.

Interacts with SH3GL2 and SNX9 through its cytoplasmic tail. Interacts with ITGA6. Zn(2+) serves as cofactor. Proteolytically cleaved in the trans-Golgi network before it reaches the plasma membrane to generate a mature protein. The removal of the pro-domain occurs via cleavage at two different sites. Processed most likely by a pro-protein convertase such as furin, at the boundary between the pro-domain and the catalytic domain. An additional upstream cleavage pro-protein convertase site (Arg-56/Glu-57) has an important role in the activation of ADAM9. In terms of processing, phosphorylation is induced in vitro by phorbol-12-myristate-13-acetate (PMA).

It localises to the cell membrane. With respect to regulation, synthesized as an inactive form which is proteolytically cleaved to generate an active enzyme. Processing at the upstream site is particularly important for activation of the proenzyme, whereas processing at the boundary between the pro-domain and the catalytic domain does not appear to be essential. Inhibited by hydroxamic acid-based inhibitors. In terms of biological role, metalloprotease that cleaves and releases a number of molecules with important roles in tumorigenesis and angiogenesis, such as TEK, KDR, EPHB4, CD40, VCAM1 and CDH5. May mediate cell-cell, cell-matrix interactions and regulate the motility of cells via interactions with integrins. The chain is Disintegrin and metalloproteinase domain-containing protein 9 from Mus musculus (Mouse).